The sequence spans 515 residues: 2-isopropylmalate synthase (515 aa).

In terms of domain architecture, Pyruvate carboxyltransferase spans 5 to 267 (VIIFDTTLRD…DTRINTQEIH (263 aa)). Mn(2+)-binding residues include Asp14, His202, His204, and Asn238. The interval 392–515 (VLDKLSAHST…VADIKNHKHH (124 aa)) is regulatory domain.

It belongs to the alpha-IPM synthase/homocitrate synthase family. LeuA type 1 subfamily. Homodimer. Mn(2+) serves as cofactor.

It is found in the cytoplasm. The catalysed reaction is 3-methyl-2-oxobutanoate + acetyl-CoA + H2O = (2S)-2-isopropylmalate + CoA + H(+). It functions in the pathway amino-acid biosynthesis; L-leucine biosynthesis; L-leucine from 3-methyl-2-oxobutanoate: step 1/4. Its function is as follows. Catalyzes the condensation of the acetyl group of acetyl-CoA with 3-methyl-2-oxobutanoate (2-ketoisovalerate) to form 3-carboxy-3-hydroxy-4-methylpentanoate (2-isopropylmalate). This is 2-isopropylmalate synthase from Haemophilus influenzae (strain PittEE).